The sequence spans 472 residues: Eukaryotic translation initiation factor 2 subunit 3, X-linked (472 aa).

N-acetylalanine is present on alanine 2. Serine 16 carries the phosphoserine modification. The 210-residue stretch at 39-248 (QATINIGTIG…IVKKIPVPPR (210 aa)) folds into the tr-type G domain. The interval 48–55 (GHVAHGKS) is G1. 51–56 (AHGKST) is a binding site for GTP. The tract at residues 76–80 (NITIK) is G2. The G3 stretch occupies residues 134–137 (DCPG). GTP-binding positions include 190-193 (NKID) and 225-227 (SAQ). The tract at residues 190 to 193 (NKID) is G4. Residues 225 to 227 (SAQ) form a G5 region. The segment at 457-469 (GQIRRGVTIKPTV) is interacts with Cdc123.

Belongs to the TRAFAC class translation factor GTPase superfamily. Classic translation factor GTPase family. EIF2G subfamily. As to quaternary structure, eukaryotic translation initiation factor 2 eIF2 is a heterotrimeric complex composed of an alpha (EIF2S1), a beta (EIF2S2) and a gamma (EIF2S3) chain. eIF2 is member of the 43S pre-initiation complex (43S PIC). Interacts (via C-terminus) with CDC123; the interaction is direct. As to expression, widely expressed.

The protein localises to the cytoplasm. It localises to the cytosol. The enzyme catalyses GTP + H2O = GDP + phosphate + H(+). In terms of biological role, member of the eIF2 complex that functions in the early steps of protein synthesis by forming a ternary complex with GTP and initiator tRNA. This complex binds to a 40S ribosomal subunit, followed by mRNA binding to form the 43S pre-initiation complex (43S PIC). Junction of the 60S ribosomal subunit to form the 80S initiation complex is preceded by hydrolysis of the GTP bound to eIF2 and release of an eIF2-GDP binary complex. In order for eIF2 to recycle and catalyze another round of initiation, the GDP bound to eIF2 must exchange with GTP by way of a reaction catalyzed by eIF-2B. Along with its paralog on chromosome Y, may contribute to spermatogenesis up to the round spermatid stage. This Rattus norvegicus (Rat) protein is Eukaryotic translation initiation factor 2 subunit 3, X-linked (Eif2s3).